The chain runs to 195 residues: ATP-dependent Clp protease proteolytic subunit (195 aa).

The active-site Nucleophile is the S99. H124 is a catalytic residue.

This sequence belongs to the peptidase S14 family. In terms of assembly, fourteen ClpP subunits assemble into 2 heptameric rings which stack back to back to give a disk-like structure with a central cavity, resembling the structure of eukaryotic proteasomes.

The protein localises to the cytoplasm. The catalysed reaction is Hydrolysis of proteins to small peptides in the presence of ATP and magnesium. alpha-casein is the usual test substrate. In the absence of ATP, only oligopeptides shorter than five residues are hydrolyzed (such as succinyl-Leu-Tyr-|-NHMec, and Leu-Tyr-Leu-|-Tyr-Trp, in which cleavage of the -Tyr-|-Leu- and -Tyr-|-Trp bonds also occurs).. In terms of biological role, cleaves peptides in various proteins in a process that requires ATP hydrolysis. Has a chymotrypsin-like activity. Plays a major role in the degradation of misfolded proteins. The polypeptide is ATP-dependent Clp protease proteolytic subunit (Desulforamulus reducens (strain ATCC BAA-1160 / DSM 100696 / MI-1) (Desulfotomaculum reducens)).